Consider the following 274-residue polypeptide: 4-hydroxy-3-methylbut-2-enyl diphosphate reductase (274 aa).

[4Fe-4S] cluster is bound at residue Cys-12. Residues His-36 and His-70 each contribute to the (2E)-4-hydroxy-3-methylbut-2-enyl diphosphate site. Dimethylallyl diphosphate-binding residues include His-36 and His-70. 2 residues coordinate isopentenyl diphosphate: His-36 and His-70. Cys-92 is a binding site for [4Fe-4S] cluster. His-120 serves as a coordination point for (2E)-4-hydroxy-3-methylbut-2-enyl diphosphate. Residue His-120 participates in dimethylallyl diphosphate binding. His-120 contributes to the isopentenyl diphosphate binding site. The active-site Proton donor is the Glu-122. Thr-158 serves as a coordination point for (2E)-4-hydroxy-3-methylbut-2-enyl diphosphate. Cys-186 contacts [4Fe-4S] cluster. 4 residues coordinate (2E)-4-hydroxy-3-methylbut-2-enyl diphosphate: Ser-214, Ser-215, Asn-216, and Ser-258. Ser-214, Ser-215, Asn-216, and Ser-258 together coordinate dimethylallyl diphosphate. Isopentenyl diphosphate-binding residues include Ser-214, Ser-215, Asn-216, and Ser-258.

The protein belongs to the IspH family. [4Fe-4S] cluster is required as a cofactor.

The enzyme catalyses isopentenyl diphosphate + 2 oxidized [2Fe-2S]-[ferredoxin] + H2O = (2E)-4-hydroxy-3-methylbut-2-enyl diphosphate + 2 reduced [2Fe-2S]-[ferredoxin] + 2 H(+). The catalysed reaction is dimethylallyl diphosphate + 2 oxidized [2Fe-2S]-[ferredoxin] + H2O = (2E)-4-hydroxy-3-methylbut-2-enyl diphosphate + 2 reduced [2Fe-2S]-[ferredoxin] + 2 H(+). It participates in isoprenoid biosynthesis; dimethylallyl diphosphate biosynthesis; dimethylallyl diphosphate from (2E)-4-hydroxy-3-methylbutenyl diphosphate: step 1/1. Its pathway is isoprenoid biosynthesis; isopentenyl diphosphate biosynthesis via DXP pathway; isopentenyl diphosphate from 1-deoxy-D-xylulose 5-phosphate: step 6/6. Catalyzes the conversion of 1-hydroxy-2-methyl-2-(E)-butenyl 4-diphosphate (HMBPP) into a mixture of isopentenyl diphosphate (IPP) and dimethylallyl diphosphate (DMAPP). Acts in the terminal step of the DOXP/MEP pathway for isoprenoid precursor biosynthesis. The chain is 4-hydroxy-3-methylbut-2-enyl diphosphate reductase from Campylobacter curvus (strain 525.92).